Consider the following 522-residue polypeptide: Sensory neuron membrane protein 1 (522 aa).

The Cytoplasmic portion of the chain corresponds to 1–11 (MQLAKPLKYAA). A helical transmembrane segment spans residues 12-32 (ISGIVAFVGLMFGWVIFPAIL). Residues 33 to 458 (KSQLKKEMAL…SQLFIPKRVV (426 aa)) lie on the Extracellular side of the membrane. N-linked (GlcNAc...) asparagine glycosylation is found at Asn67, Asn105, and Asn229. 3 disulfides stabilise this stretch: Cys268–Cys333, Cys297–Cys352, and Cys335–Cys341. N-linked (GlcNAc...) asparagine glycosylation occurs at Asn440. Residues 459-479 (SVVCWCMISFGSLGVIAAVIF) form a helical membrane-spanning segment. At 480–522 (HFKGDIMHLAVAGDNSVSKIKPENDENKEVGVMGQNQEPAKVM) the chain is on the cytoplasmic side. A disordered region spans residues 500-522 (KPENDENKEVGVMGQNQEPAKVM). Positions 513–522 (GQNQEPAKVM) are enriched in polar residues.

Belongs to the CD36 family. Principal component of the olfactory cilia membrane. Detected in both male and female antennae but not present in leg, abdomen, thorax or head.

The protein localises to the cell membrane. Plays an olfactory role that is not restricted to pheromone sensitivity. The chain is Sensory neuron membrane protein 1 from Bombyx mori (Silk moth).